The following is a 433-amino-acid chain: tRNA modification GTPase MnmE (433 aa).

Residues arginine 24, glutamate 81, and arginine 120 each contribute to the (6S)-5-formyl-5,6,7,8-tetrahydrofolate site. A TrmE-type G domain is found at 216–359 (GVEIVVLGAP…LLAALRARVE (144 aa)). Asparagine 226 contacts K(+). GTP contacts are provided by residues 226–231 (NAGKST), 245–251 (SDIPGTT), 270–273 (DTAG), and 340–342 (SAR). A Mg(2+)-binding site is contributed by serine 230. Serine 245, isoleucine 247, and threonine 250 together coordinate K(+). Threonine 251 contacts Mg(2+). Lysine 433 is a binding site for (6S)-5-formyl-5,6,7,8-tetrahydrofolate.

Belongs to the TRAFAC class TrmE-Era-EngA-EngB-Septin-like GTPase superfamily. TrmE GTPase family. As to quaternary structure, homodimer. Heterotetramer of two MnmE and two MnmG subunits. K(+) serves as cofactor.

The protein localises to the cytoplasm. In terms of biological role, exhibits a very high intrinsic GTPase hydrolysis rate. Involved in the addition of a carboxymethylaminomethyl (cmnm) group at the wobble position (U34) of certain tRNAs, forming tRNA-cmnm(5)s(2)U34. This is tRNA modification GTPase MnmE from Acidiphilium cryptum (strain JF-5).